The following is a 295-amino-acid chain: Protoheme IX farnesyltransferase (295 aa).

Helical transmembrane passes span 7–27, 34–54, 78–98, 106–126, 131–151, 161–181, 207–227, 228–248, and 263–283; these read VTKPGIIFGNLISVIGGFLLA, VPLFILTMAGVSLVVASGCVF, LIAPGVSLWYASALGVAGIAL, LAALLAVLGFIVYVGVYSLYM, VYGTLVGSLSGAAPPVIGYCA, LILLAIFSLWQMPHSYAIAIF, ITLYILAFMVPTLMLFLGGYA, GYKYLIVATAVSVWWLGMALS, and LFMFSIVTITCLSVMMSVDFQ.

It belongs to the UbiA prenyltransferase family. Protoheme IX farnesyltransferase subfamily.

It localises to the cell inner membrane. It catalyses the reaction heme b + (2E,6E)-farnesyl diphosphate + H2O = Fe(II)-heme o + diphosphate. The protein operates within porphyrin-containing compound metabolism; heme O biosynthesis; heme O from protoheme: step 1/1. Its function is as follows. Converts heme B (protoheme IX) to heme O by substitution of the vinyl group on carbon 2 of heme B porphyrin ring with a hydroxyethyl farnesyl side group. The protein is Protoheme IX farnesyltransferase of Aeromonas salmonicida (strain A449).